A 670-amino-acid chain; its full sequence is MTFSVQHAEIHFNRNHIPVSDQFNDVYFSNENGLAETDYVFLQGNQLWERWISHNEANFVIAETGFGTGLNFFAVTQLFREFRQQHENHPLKRLNFISFEKYPLKITALSQAHLAYPQFEDLSAHLQRYWPSLILGCHRIHFGETTLDLWLGNVSENLPQLGDYMNERIDAWFLDGFAPSKNPEMWNDDLYKLMFRFTKPNGSFATFTAASAVRKGLESAGFNVTKRKGFGKKRECLSGLKIQSKSTVLSTPWYLAQPAKMEKQDVAIIGGGIASFCAAISLVKRGAKVTIYCEDDALALNASGNKQGAFYPQLSDDNALTVDFYLHAFSYGRQLLDWAIEQNIEFEHEFCGVALCAYNEKSAVKLTKISQLGLPNEIFQMLSAEQLSEKVGLPLNCEGGWIEQGAWLAPRQFVQNAFSFLEKQGVIIKTSQKITALSQQEKGWELENTQGQKYCHEVVILANGYKITDFVQTEKLPLYPIRGQVSQIPTSENLLKLKSVLCYDGYLTPANQLKTSHCIGASHVRDNVDRHFSEQEQQENQQKLQQNIAQPWTQDVNTSDNLARVGIRCSVRDLAPMVGNVPHFEQQQADYYNLFNLRRRKQPIQSAANFQNIFLIAALGSRGLTSAPLLGETLASIIYGEPLPISEGILHNLSANRAWVKKWLKGSKVE.

Residues 1–242 (MTFSVQHAEI…KRECLSGLKI (242 aa)) are tRNA (mnm(5)s(2)U34)-methyltransferase. The segment at 269-670 (IGGGIASFCA…KKWLKGSKVE (402 aa)) is FAD-dependent cmnm(5)s(2)U34 oxidoreductase.

It in the N-terminal section; belongs to the methyltransferase superfamily. tRNA (mnm(5)s(2)U34)-methyltransferase family. In the C-terminal section; belongs to the DAO family. It depends on FAD as a cofactor.

It localises to the cytoplasm. It carries out the reaction 5-aminomethyl-2-thiouridine(34) in tRNA + S-adenosyl-L-methionine = 5-methylaminomethyl-2-thiouridine(34) in tRNA + S-adenosyl-L-homocysteine + H(+). In terms of biological role, catalyzes the last two steps in the biosynthesis of 5-methylaminomethyl-2-thiouridine (mnm(5)s(2)U) at the wobble position (U34) in tRNA. Catalyzes the FAD-dependent demodification of cmnm(5)s(2)U34 to nm(5)s(2)U34, followed by the transfer of a methyl group from S-adenosyl-L-methionine to nm(5)s(2)U34, to form mnm(5)s(2)U34. The sequence is that of tRNA 5-methylaminomethyl-2-thiouridine biosynthesis bifunctional protein MnmC from Haemophilus influenzae (strain 86-028NP).